The sequence spans 506 residues: UDP-N-acetylmuramoyl-L-alanyl-D-glutamate--2,6-diaminopimelate ligase (506 aa).

Residue Ser-42 participates in UDP-N-acetyl-alpha-D-muramoyl-L-alanyl-D-glutamate binding. Residue 125 to 131 (GTSGKTT) participates in ATP binding. Residues 166–167 (TT), Ser-193, and Arg-201 each bind UDP-N-acetyl-alpha-D-muramoyl-L-alanyl-D-glutamate. Residue Lys-233 is modified to N6-carboxylysine. Meso-2,6-diaminopimelate contacts are provided by residues Arg-395, 419-422 (DNPR), Gly-475, and Glu-479. A Meso-diaminopimelate recognition motif motif is present at residues 419 to 422 (DNPR).

This sequence belongs to the MurCDEF family. MurE subfamily. It depends on Mg(2+) as a cofactor. In terms of processing, carboxylation is probably crucial for Mg(2+) binding and, consequently, for the gamma-phosphate positioning of ATP.

It localises to the cytoplasm. It catalyses the reaction UDP-N-acetyl-alpha-D-muramoyl-L-alanyl-D-glutamate + meso-2,6-diaminopimelate + ATP = UDP-N-acetyl-alpha-D-muramoyl-L-alanyl-gamma-D-glutamyl-meso-2,6-diaminopimelate + ADP + phosphate + H(+). Its pathway is cell wall biogenesis; peptidoglycan biosynthesis. Catalyzes the addition of meso-diaminopimelic acid to the nucleotide precursor UDP-N-acetylmuramoyl-L-alanyl-D-glutamate (UMAG) in the biosynthesis of bacterial cell-wall peptidoglycan. This chain is UDP-N-acetylmuramoyl-L-alanyl-D-glutamate--2,6-diaminopimelate ligase, found in Streptomyces avermitilis (strain ATCC 31267 / DSM 46492 / JCM 5070 / NBRC 14893 / NCIMB 12804 / NRRL 8165 / MA-4680).